An 870-amino-acid polypeptide reads, in one-letter code: DNA topoisomerase 1 (870 aa).

Positions 1-128 (MKSPRFRHSQ…RVYKSSFEAA (128 aa)) constitute a Toprim domain. The Topo IA-type catalytic domain maps to 143–578 (YDGLAYSAKA…QTNAFVQKIT (436 aa)). The interval 180–185 (SSGRVQ) is interaction with DNA. Residue tyrosine 299 is the O-(5'-phospho-DNA)-tyrosine intermediate of the active site. C4-type zinc fingers lie at residues 603–627 (CQCP…HPNC), 693–717 (CPKC…QNGC), and 784–807 (CPLC…KRGC).

The protein belongs to the type IA topoisomerase family. In terms of assembly, monomer.

The catalysed reaction is ATP-independent breakage of single-stranded DNA, followed by passage and rejoining.. Releases the supercoiling and torsional tension of DNA, which is introduced during the DNA replication and transcription, by transiently cleaving and rejoining one strand of the DNA duplex. Introduces a single-strand break via transesterification at a target site in duplex DNA. The scissile phosphodiester is attacked by the catalytic tyrosine of the enzyme, resulting in the formation of a DNA-(5'-phosphotyrosyl)-enzyme intermediate and the expulsion of a 3'-OH DNA strand. The free DNA strand then undergoes passage around the unbroken strand, thus removing DNA supercoils. Finally, in the religation step, the DNA 3'-OH attacks the covalent intermediate to expel the active-site tyrosine and restore the DNA phosphodiester backbone. The protein is DNA topoisomerase 1 (topX) of Bacillus anthracis.